The following is a 334-amino-acid chain: 5-formaminoimidazole-4-carboxamide-1-(beta)-D-ribofuranosyl 5'-monophosphate synthetase (334 aa).

4 residues coordinate 5-amino-1-(5-phospho-beta-D-ribosyl)imidazole-4-carboxamide: Ser10, His11, Ser71, and His75. Residues 78-325 form the ATP-grasp domain; the sequence is IELVENMKVP…IAMEIREAIE (248 aa). ATP-binding positions include 132–142, 173–176, and Glu204; these read KPHGAKGGKGY and QEYV. Asn232 lines the 5-amino-1-(5-phospho-beta-D-ribosyl)imidazole-4-carboxamide pocket. Residues Glu270 and Glu283 each coordinate Mg(2+).

It belongs to the phosphohexose mutase family. In terms of assembly, homotrimer and homohexamer. Requires Mg(2+) as cofactor. Mn(2+) is required as a cofactor.

It carries out the reaction 5-amino-1-(5-phospho-beta-D-ribosyl)imidazole-4-carboxamide + formate + ATP = 5-formamido-1-(5-phospho-D-ribosyl)imidazole-4-carboxamide + ADP + phosphate. It functions in the pathway purine metabolism; IMP biosynthesis via de novo pathway; 5-formamido-1-(5-phospho-D-ribosyl)imidazole-4-carboxamide from 5-amino-1-(5-phospho-D-ribosyl)imidazole-4-carboxamide (formate route): step 1/1. In terms of biological role, catalyzes the ATP- and formate-dependent formylation of 5-aminoimidazole-4-carboxamide-1-beta-d-ribofuranosyl 5'-monophosphate (AICAR) to 5-formaminoimidazole-4-carboxamide-1-beta-d-ribofuranosyl 5'-monophosphate (FAICAR) in the absence of folates. The protein is 5-formaminoimidazole-4-carboxamide-1-(beta)-D-ribofuranosyl 5'-monophosphate synthetase of Pyrococcus furiosus (strain ATCC 43587 / DSM 3638 / JCM 8422 / Vc1).